The chain runs to 209 residues: Urease accessory protein UreG (209 aa).

Glycine 14–threonine 21 provides a ligand contact to GTP.

It belongs to the SIMIBI class G3E GTPase family. UreG subfamily. In terms of assembly, homodimer. UreD, UreF and UreG form a complex that acts as a GTP-hydrolysis-dependent molecular chaperone, activating the urease apoprotein by helping to assemble the nickel containing metallocenter of UreC. The UreE protein probably delivers the nickel.

It is found in the cytoplasm. In terms of biological role, facilitates the functional incorporation of the urease nickel metallocenter. This process requires GTP hydrolysis, probably effectuated by UreG. In Rhodopseudomonas palustris (strain ATCC BAA-98 / CGA009), this protein is Urease accessory protein UreG.